A 131-amino-acid chain; its full sequence is Lymphocyte antigen 6C2 (131 aa).

An N-terminal signal peptide occupies residues methionine 1–glycine 26. A UPAR/Ly6 domain is found at leucine 27–glycine 116. Cystine bridges form between cysteine 29–cysteine 53, cysteine 32–cysteine 41, cysteine 46–cysteine 74, cysteine 78–cysteine 95, and cysteine 96–cysteine 101. A lipid anchor (GPI-anchor amidated glycine) is attached at glycine 109. Residues serine 110 to leucine 131 constitute a propeptide, removed in mature form.

It is found in the cell membrane. This chain is Lymphocyte antigen 6C2 (Ly6c2), found in Mus musculus (Mouse).